The following is a 504-amino-acid chain: ATP synthase subunit alpha (504 aa).

Residue 171 to 178 (GDRQTGKT) coordinates ATP.

Belongs to the ATPase alpha/beta chains family. In terms of assembly, F-type ATPases have 2 components, CF(1) - the catalytic core - and CF(0) - the membrane proton channel. CF(1) has five subunits: alpha(3), beta(3), gamma(1), delta(1), epsilon(1). CF(0) has three main subunits: a(1), b(2) and c(9-12). The alpha and beta chains form an alternating ring which encloses part of the gamma chain. CF(1) is attached to CF(0) by a central stalk formed by the gamma and epsilon chains, while a peripheral stalk is formed by the delta and b chains.

It is found in the cell inner membrane. It catalyses the reaction ATP + H2O + 4 H(+)(in) = ADP + phosphate + 5 H(+)(out). Produces ATP from ADP in the presence of a proton gradient across the membrane. The alpha chain is a regulatory subunit. The protein is ATP synthase subunit alpha of Helicobacter hepaticus (strain ATCC 51449 / 3B1).